Reading from the N-terminus, the 672-residue chain is Glycerophosphocholine phosphodiesterase GPCPD1 (672 aa).

Positions 1 to 113 constitute a CBM20 domain; the sequence is MTPSQVTFEI…IIIDDGQFGI (113 aa). Substrate-binding positions include arginine 68 and 86-87; that span reads HK. Serine 175 is modified (phosphoserine). The GP-PDE domain maps to 318 to 618; sequence PLDVGHRGAG…DRIYDWMPEQ (301 aa). At tyrosine 608 the chain carries Phosphotyrosine.

This sequence belongs to the glycerophosphoryl diester phosphodiesterase family.

The protein resides in the cytoplasm. The protein localises to the cytosol. The enzyme catalyses sn-glycerol 3-phosphocholine + H2O = sn-glycerol 3-phosphate + choline + H(+). May be involved in the negative regulation of skeletal muscle differentiation, independently of its glycerophosphocholine phosphodiesterase activity. The sequence is that of Glycerophosphocholine phosphodiesterase GPCPD1 (Gpcpd1) from Rattus norvegicus (Rat).